The sequence spans 112 residues: UPF0342 protein SP_1372 (112 aa).

The protein belongs to the UPF0342 family.

This Streptococcus pneumoniae serotype 4 (strain ATCC BAA-334 / TIGR4) protein is UPF0342 protein SP_1372.